A 412-amino-acid polypeptide reads, in one-letter code: MANVADTKLYDILGVPPGASENELKKAYRKLAKEYHPDKNPNAGDKFKEISFAYEVLSNPEKRELYDRYGEQGLREGSGGGGGMDDIFSHIFGGGLFGFMGNQSRSRNGRRRGEDMMHPLKVSLEDLYNGKTTKLQLSKNVLCSACSGQGGKSGAVQKCSACRGRGVRIMIRQLAPGMVQQMQSVCSDCNGEGEVINEKDRCKKCEGKKVIKEVKILEVHVDKGMKHGQRITFTGEADQAPGVEPGDIVLLLQEKEHEVFQRDGNDLHMTYKIGLVEALCGFQFTFKHLDGRQIVVKYPPGKVIEPGCVRVVRGEGMPQYRNPFEKGDLYIKFDVQFPENNWINPDKLSELEDLLPSRPEVPNIIGETEEVELQEFDSTRGSGGGQRREAYNDSSDEESSSHHGPGVQCAHQ.

Residues 8–70 (KLYDILGVPP…EKRELYDRYG (63 aa)) enclose the J domain. The residue at position 39 (Lys39) is an N6-acetyllysine. A phosphoserine mark is found at Ser78 and Ser123. Residues 130–214 (GKTTKLQLSK…CEGKKVIKEV (85 aa)) form a CR-type zinc finger. A Glycyl lysine isopeptide (Lys-Gly) (interchain with G-Cter in SUMO2) cross-link involves residue Lys134. Zn(2+)-binding residues include Cys143 and Cys146. The stretch at 143–150 (CSACSGQG) is one CXXCXGXG motif repeat. N6-acetyllysine is present on Lys152. Residues Cys159, Cys162, Cys186, Cys189, Cys202, and Cys205 each contribute to the Zn(2+) site. CXXCXGXG motif repeat units lie at residues 159–166 (CSACRGRG), 186–193 (CSDCNGEG), and 202–209 (CKKCEGKK). Residues 365–412 (IGETEEVELQEFDSTRGSGGGQRREAYNDSSDEESSSHHGPGVQCAHQ) are disordered. A Phosphotyrosine modification is found at Tyr391. Phosphoserine occurs at positions 394 and 395. The residue at position 409 (Cys409) is a Cysteine methyl ester. The S-farnesyl cysteine moiety is linked to residue Cys409. Positions 410–412 (AHQ) are cleaved as a propeptide — removed in mature form.

It is found in the membrane. Functionally, co-chaperone of Hsc70. Stimulates ATP hydrolysis and the folding of unfolded proteins mediated by HSPA1A/B (in vitro). The protein is DnaJ homolog subfamily A member 2 (DNAJA2) of Homo sapiens (Human).